Here is a 290-residue protein sequence, read N- to C-terminus: Acetyl-coenzyme A carboxylase carboxyl transferase subunit beta (290 aa).

One can recognise a CoA carboxyltransferase N-terminal domain in the interval 27–290 (LWVKCPSCES…LQKQPADAVA (264 aa)). Zn(2+)-binding residues include Cys-31, Cys-34, Cys-50, and Cys-53. The segment at 31-53 (CPSCESTLYRTDVEANLHVCPKC) adopts a C4-type zinc-finger fold.

The protein belongs to the AccD/PCCB family. In terms of assembly, acetyl-CoA carboxylase is a heterohexamer composed of biotin carboxyl carrier protein (AccB), biotin carboxylase (AccC) and two subunits each of ACCase subunit alpha (AccA) and ACCase subunit beta (AccD). It depends on Zn(2+) as a cofactor.

It is found in the cytoplasm. It carries out the reaction N(6)-carboxybiotinyl-L-lysyl-[protein] + acetyl-CoA = N(6)-biotinyl-L-lysyl-[protein] + malonyl-CoA. It participates in lipid metabolism; malonyl-CoA biosynthesis; malonyl-CoA from acetyl-CoA: step 1/1. In terms of biological role, component of the acetyl coenzyme A carboxylase (ACC) complex. Biotin carboxylase (BC) catalyzes the carboxylation of biotin on its carrier protein (BCCP) and then the CO(2) group is transferred by the transcarboxylase to acetyl-CoA to form malonyl-CoA. The sequence is that of Acetyl-coenzyme A carboxylase carboxyl transferase subunit beta from Cupriavidus taiwanensis (strain DSM 17343 / BCRC 17206 / CCUG 44338 / CIP 107171 / LMG 19424 / R1) (Ralstonia taiwanensis (strain LMG 19424)).